The sequence spans 554 residues: Phenylalanine--tRNA ligase beta subunit (554 aa).

The B5 domain occupies Leu276–Gly351. Mg(2+)-binding residues include Asp329, Asp335, Glu338, and Glu339.

This sequence belongs to the phenylalanyl-tRNA synthetase beta subunit family. Type 2 subfamily. In terms of assembly, tetramer of two alpha and two beta subunits. Requires Mg(2+) as cofactor.

It localises to the cytoplasm. It carries out the reaction tRNA(Phe) + L-phenylalanine + ATP = L-phenylalanyl-tRNA(Phe) + AMP + diphosphate + H(+). The sequence is that of Phenylalanine--tRNA ligase beta subunit from Methanococcus vannielii (strain ATCC 35089 / DSM 1224 / JCM 13029 / OCM 148 / SB).